The chain runs to 188 residues: UPF0232 protein RHA1_ro03670 (188 aa).

Disordered regions lie at residues 1–20, 31–78, and 166–188; these read MTDDLEPTAPAAAAPEPEVK, EARA…QPFG, and PTAPSWRKGERHIRGRGPRDTYG. A compositionally biased stretch (low complexity) spans 7-16; sequence PTAPAAAAPE.

The protein belongs to the UPF0232 family.

The protein is UPF0232 protein RHA1_ro03670 of Rhodococcus jostii (strain RHA1).